A 363-amino-acid chain; its full sequence is uncharacterized protein (363 aa).

Residues 1–20 form the signal peptide; sequence MKRAPLITGLLLISTSCAYA.

It belongs to the fimbrial protein family.

The protein resides in the fimbrium. Functionally, part of the yraHIJK fimbrial operon. Could contribute to adhesion to various surfaces in specific environmental niches. Increases adhesion to eukaryotic T24 bladder epithelial cells in the absence of fim operon. This is an uncharacterized protein from Escherichia coli (strain K12).